Reading from the N-terminus, the 428-residue chain is UDP-N-acetylglucosamine 1-carboxyvinyltransferase (428 aa).

25-26 (KN) contributes to the phosphoenolpyruvate binding site. UDP-N-acetyl-alpha-D-glucosamine is bound at residue Arg-102. The Proton donor role is filled by Cys-126. The residue at position 126 (Cys-126) is a 2-(S-cysteinyl)pyruvic acid O-phosphothioketal. Positions 316 and 338 each coordinate UDP-N-acetyl-alpha-D-glucosamine.

Belongs to the EPSP synthase family. MurA subfamily.

It is found in the cytoplasm. It catalyses the reaction phosphoenolpyruvate + UDP-N-acetyl-alpha-D-glucosamine = UDP-N-acetyl-3-O-(1-carboxyvinyl)-alpha-D-glucosamine + phosphate. It functions in the pathway cell wall biogenesis; peptidoglycan biosynthesis. Cell wall formation. Adds enolpyruvyl to UDP-N-acetylglucosamine. This is UDP-N-acetylglucosamine 1-carboxyvinyltransferase from Anaplasma marginale (strain St. Maries).